The following is a 167-amino-acid chain: tRNA-specific adenosine deaminase (167 aa).

Residues 6-117 (FSHEYWMRHA…DAKTGAAGSL (112 aa)) enclose the CMP/dCMP-type deaminase domain. Residue His57 coordinates Zn(2+). Glu59 functions as the Proton donor in the catalytic mechanism. Residues Cys87 and Cys90 each coordinate Zn(2+).

It belongs to the cytidine and deoxycytidylate deaminase family. Homodimer. Zn(2+) serves as cofactor.

The catalysed reaction is adenosine(34) in tRNA + H2O + H(+) = inosine(34) in tRNA + NH4(+). Catalyzes the deamination of adenosine to inosine at the wobble position 34 of tRNA(Arg2). This chain is tRNA-specific adenosine deaminase, found in Escherichia coli O157:H7.